We begin with the raw amino-acid sequence, 127 residues long: UPF0166 protein PYRAB06660 (127 aa).

The protein belongs to the UPF0166 family.

The polypeptide is UPF0166 protein PYRAB06660 (Pyrococcus abyssi (strain GE5 / Orsay)).